The following is a 297-amino-acid chain: MSWIERILGRTSSSSSSSKSKVPEGVWTKCTSCEQVLYSEELKRNMHVCPKCNHHMRFDARTRLLSLLDQDSAQEIAAELEPQDVLKFKDLKKYKDRLTAAQKQTGEKDSFITMYGTLHNMPVVVASFNFEFMGGSMGSVVGAKFVRAAERALADNIPFICFSASGGARMQEALFSLMQMAKTSAILAKMREKGIPFISILTDPTLGGVSASLAMLGDINIAEPKALIGFAGPRVIEQTVREKLPEGFQRAEFLLEHGAIDMIVQRKDMRDTLARLCAKMTNKPTPFKTAELIVEEA.

Residues 1–23 (MSWIERILGRTSSSSSSSKSKVP) are disordered. One can recognise a CoA carboxyltransferase N-terminal domain in the interval 26 to 295 (VWTKCTSCEQ…PFKTAELIVE (270 aa)). Positions 30, 33, 49, and 52 each coordinate Zn(2+). The C4-type zinc finger occupies 30–52 (CTSCEQVLYSEELKRNMHVCPKC).

This sequence belongs to the AccD/PCCB family. In terms of assembly, acetyl-CoA carboxylase is a heterohexamer composed of biotin carboxyl carrier protein (AccB), biotin carboxylase (AccC) and two subunits each of ACCase subunit alpha (AccA) and ACCase subunit beta (AccD). The cofactor is Zn(2+).

The protein resides in the cytoplasm. It catalyses the reaction N(6)-carboxybiotinyl-L-lysyl-[protein] + acetyl-CoA = N(6)-biotinyl-L-lysyl-[protein] + malonyl-CoA. It participates in lipid metabolism; malonyl-CoA biosynthesis; malonyl-CoA from acetyl-CoA: step 1/1. Component of the acetyl coenzyme A carboxylase (ACC) complex. Biotin carboxylase (BC) catalyzes the carboxylation of biotin on its carrier protein (BCCP) and then the CO(2) group is transferred by the transcarboxylase to acetyl-CoA to form malonyl-CoA. The polypeptide is Acetyl-coenzyme A carboxylase carboxyl transferase subunit beta (Actinobacillus pleuropneumoniae serotype 5b (strain L20)).